Consider the following 143-residue polypeptide: Large-conductance mechanosensitive channel (143 aa).

Helical transmembrane passes span 10–30 (FAVKGNVMDLAVGVIIGGAFS) and 89–109 (GSFITVAINFVILAFIIFLMV).

Belongs to the MscL family. As to quaternary structure, homopentamer.

The protein resides in the cell inner membrane. Functionally, channel that opens in response to stretch forces in the membrane lipid bilayer. May participate in the regulation of osmotic pressure changes within the cell. This chain is Large-conductance mechanosensitive channel, found in Burkholderia vietnamiensis (strain G4 / LMG 22486) (Burkholderia cepacia (strain R1808)).